The sequence spans 89 residues: MTAGKQHINKSLLYEGRVVSNSMNKTVVILVETRKTHPKFKKIVRRSVRLKVHDEKNECVVGDKILAIETRPLSKEKRHRLYKIVEKAK.

This sequence belongs to the universal ribosomal protein uS17 family. In terms of assembly, part of the 30S ribosomal subunit.

Functionally, one of the primary rRNA binding proteins, it binds specifically to the 5'-end of 16S ribosomal RNA. In Leptospira interrogans serogroup Icterohaemorrhagiae serovar Lai (strain 56601), this protein is Small ribosomal subunit protein uS17.